A 145-amino-acid chain; its full sequence is Transcription antitermination protein NusB (145 aa).

The protein belongs to the NusB family.

In terms of biological role, involved in transcription antitermination. Required for transcription of ribosomal RNA (rRNA) genes. Binds specifically to the boxA antiterminator sequence of the ribosomal RNA (rrn) operons. The polypeptide is Transcription antitermination protein NusB (Burkholderia mallei (strain NCTC 10247)).